A 428-amino-acid chain; its full sequence is MGTHVIKMPDIGEGIAEVELVEWHVQVGDSVNEDQVLAEVMTDKATVEIPSPVAGRILALGGQPGQVMAVGGELIRLEVEGAGNLAESPAAATPAAPVAATPEKPKEAPVAAPKAAAEAPRALRDSEAPRQRRQPGERPLASPAVRQRARDLGIELQFVQGSGPAGRVLHEDLDAYLTQDGSVARSGGAAQGYAERHDEQAVPVIGLRRKIAQKMQDAKRRIPHFSYVEEIDVTDLEALRAHLNQKWGGQRGKLTLLPFLVRAMVVALRDFPQLNARYDDEAEVVTRYGAVHVGIATQSDNGLMVPVLRHAESRDLWGNASEVARLAEAARSGKAQRQELSGSTITLSSLGVLGGIVSTPVINHPEVAIVGVNRIVERPMVVGGNIVVRKMMNLSSSFDHRVVDGMDAAAFIQAVRGLLEHPATLFLE.

Residues 3–78 (THVIKMPDIG…AVGGELIRLE (76 aa)) form the Lipoyl-binding domain. The residue at position 44 (Lys-44) is an N6-lipoyllysine. Residues 88 to 145 (SPAAATPAAPVAATPEKPKEAPVAAPKAAAEAPRALRDSEAPRQRRQPGERPLASPAV) are disordered. Residues 89 to 120 (PAAATPAAPVAATPEKPKEAPVAAPKAAAEAP) show a composition bias toward low complexity. Basic and acidic residues predominate over residues 121–136 (RALRDSEAPRQRRQPG). Residues 140 to 177 (LASPAVRQRARDLGIELQFVQGSGPAGRVLHEDLDAYL) enclose the Peripheral subunit-binding (PSBD) domain. Residues His-400 and Asp-404 contribute to the active site.

This sequence belongs to the 2-oxoacid dehydrogenase family. In terms of assembly, forms a 24-polypeptide structural core with octahedral symmetry. (R)-lipoate serves as cofactor.

It catalyses the reaction N(6)-[(R)-dihydrolipoyl]-L-lysyl-[protein] + 2-methylpropanoyl-CoA = N(6)-[(R)-S(8)-2-methylpropanoyldihydrolipoyl]-L-lysyl-[protein] + CoA. In terms of biological role, the branched-chain alpha-keto dehydrogenase complex catalyzes the overall conversion of alpha-keto acids to acyl-CoA and CO(2). It contains multiple copies of three enzymatic components: branched-chain alpha-keto acid decarboxylase (E1), lipoamide acyltransferase (E2) and lipoamide dehydrogenase (E3). The protein is Lipoamide acyltransferase component of branched-chain alpha-keto acid dehydrogenase complex (bkdB) of Pseudomonas aeruginosa (strain ATCC 15692 / DSM 22644 / CIP 104116 / JCM 14847 / LMG 12228 / 1C / PRS 101 / PAO1).